The sequence spans 594 residues: Putative aldehyde oxidase Art an 7 (594 aa).

A signal peptide spans 1 to 23; sequence MASSIKTVILFLLPLLLAYSVLA. Residues 28 to 56 form a disordered region; the sequence is TDGGDKPGPEIDDGGGDKPVPGNNDGASD.

Post-translationally, the N-terminus is blocked. Glycosylated. In terms of tissue distribution, expressed in pollen (at protein level).

It localises to the cytoplasm. The catalysed reaction is an aldehyde + O2 + H2O = a carboxylate + H2O2 + H(+). In terms of biological role, catalyzes the oxidation of aldehydes to the corresponding carboxylate by coupling the reaction to the reduction of dioxygen to hydrogen peroxide. Substrates include glyoxal and other aldehydes. Does not have enzymatic activity on D-galactose. This is Putative aldehyde oxidase Art an 7 from Artemisia annua (Sweet wormwood).